Here is a 159-residue protein sequence, read N- to C-terminus: Transcription elongation factor GreA (159 aa).

Residues 3-37 (TNKEVVLTYEGLQKLEQELENLKTVKRREVAERIK) adopt a coiled-coil conformation.

It belongs to the GreA/GreB family.

In terms of biological role, necessary for efficient RNA polymerase transcription elongation past template-encoded arresting sites. The arresting sites in DNA have the property of trapping a certain fraction of elongating RNA polymerases that pass through, resulting in locked ternary complexes. Cleavage of the nascent transcript by cleavage factors such as GreA or GreB allows the resumption of elongation from the new 3'terminus. GreA releases sequences of 2 to 3 nucleotides. This chain is Transcription elongation factor GreA, found in Acetivibrio thermocellus (strain ATCC 27405 / DSM 1237 / JCM 9322 / NBRC 103400 / NCIMB 10682 / NRRL B-4536 / VPI 7372) (Clostridium thermocellum).